Reading from the N-terminus, the 211-residue chain is MAVSAIIVGLGNPGPRYAATRHNFGFMVLDALMERARQLGGAPKATLTGRKDLEAVTLSLPVLPGGAFAQFACVKPLTFMNLSGRAVRAALDFYKLAPTDVFVLHDELDLPLGRMRLKRGGGNAGHNGLKSINQELGSPEFVRLRLGIGRPEGRDVAGYVLEAFRGDETPVVRQVVPAAVDGIMAFFEDGLETAQRRVGGFDAVPPPLPQP.

Tyrosine 17 is a binding site for tRNA. The Proton acceptor role is filled by histidine 22. Phenylalanine 79, asparagine 81, and asparagine 127 together coordinate tRNA.

Belongs to the PTH family. Monomer.

It localises to the cytoplasm. The enzyme catalyses an N-acyl-L-alpha-aminoacyl-tRNA + H2O = an N-acyl-L-amino acid + a tRNA + H(+). Its function is as follows. Hydrolyzes ribosome-free peptidyl-tRNAs (with 1 or more amino acids incorporated), which drop off the ribosome during protein synthesis, or as a result of ribosome stalling. In terms of biological role, catalyzes the release of premature peptidyl moieties from peptidyl-tRNA molecules trapped in stalled 50S ribosomal subunits, and thus maintains levels of free tRNAs and 50S ribosomes. This chain is Peptidyl-tRNA hydrolase, found in Solidesulfovibrio magneticus (strain ATCC 700980 / DSM 13731 / RS-1) (Desulfovibrio magneticus).